Here is a 197-residue protein sequence, read N- to C-terminus: MTSLYLASGSPRRQELLAQLGVTFERIVTGIEEQRQPQESAQQYVVRLAREKAQAGVAQTAQDLPVLGADTIVILNGEVLEKPRDAEHAAQMLRKLSGQTHQVMTAVALADSQHILDCLVVTDVTFRTLTDEDIAGYVASGEPLDKAGAYGIQGLGGCFVRKINGSFHAVVGLPLVETYELLSNFNALREKRDKHDG.

Catalysis depends on aspartate 70, which acts as the Proton acceptor.

This sequence belongs to the Maf family. YhdE subfamily. A divalent metal cation serves as cofactor.

The protein localises to the cytoplasm. It carries out the reaction dTTP + H2O = dTMP + diphosphate + H(+). It catalyses the reaction UTP + H2O = UMP + diphosphate + H(+). Nucleoside triphosphate pyrophosphatase that hydrolyzes dTTP and UTP. May have a dual role in cell division arrest and in preventing the incorporation of modified nucleotides into cellular nucleic acids. This is dTTP/UTP pyrophosphatase (yceF2) from Escherichia coli O6:K15:H31 (strain 536 / UPEC).